We begin with the raw amino-acid sequence, 940 residues long: UvrABC system protein A (940 aa).

ATP is bound at residue 31–38; it reads GLSGSGKS. The segment at 252-279 adopts a C4-type zinc-finger fold; that stretch reads CPHCGYSMRELEPRLFSFNNPAGACPTC. 2 consecutive ABC transporter domains span residues 309-586 and 606-936; these read WDQK…PNSL and KDAK…RFLK. An ATP-binding site is contributed by 639-646; the sequence is GVSGSGKS. Residues 739 to 765 form a C4-type zinc finger; that stretch reads CEACQGDGVIKVEMHFLPDVYVPCDVC.

The protein belongs to the ABC transporter superfamily. UvrA family. In terms of assembly, forms a heterotetramer with UvrB during the search for lesions.

The protein resides in the cytoplasm. Functionally, the UvrABC repair system catalyzes the recognition and processing of DNA lesions. UvrA is an ATPase and a DNA-binding protein. A damage recognition complex composed of 2 UvrA and 2 UvrB subunits scans DNA for abnormalities. When the presence of a lesion has been verified by UvrB, the UvrA molecules dissociate. This chain is UvrABC system protein A, found in Vibrio cholerae serotype O1 (strain ATCC 39315 / El Tor Inaba N16961).